The sequence spans 300 residues: Cation-efflux pump FieF (300 aa).

4 helical membrane passes run 12-32 (AAIA…FAWW), 39-59 (ILAA…NLLV), 82-102 (AALA…LTGI), and 114-134 (PGVG…LVTF). 2 residues coordinate Zn(2+): D45 and D49. Zn(2+) is bound by residues H153 and D157. The chain crosses the membrane as a helical span at residues 164–184 (ILVALGLAWYGWHRADALFAL).

Belongs to the cation diffusion facilitator (CDF) transporter (TC 2.A.4) family. FieF subfamily. Homodimer.

The protein resides in the cell inner membrane. It carries out the reaction Zn(2+)(in) + H(+)(out) = Zn(2+)(out) + H(+)(in). The catalysed reaction is Cd(2+)(in) + H(+)(out) = Cd(2+)(out) + H(+)(in). It catalyses the reaction Fe(2+)(in) + H(+)(out) = Fe(2+)(out) + H(+)(in). Divalent metal cation transporter which exports Zn(2+), Cd(2+) and possibly Fe(2+). May be involved in zinc and iron detoxification by efflux. The sequence is that of Cation-efflux pump FieF from Citrobacter koseri (strain ATCC BAA-895 / CDC 4225-83 / SGSC4696).